Here is a 253-residue protein sequence, read N- to C-terminus: CENP-A recruiting complex protein mis20 (253 aa).

Positions 113–136 (TGPTTSKNKHPSHSNTIRSPPYKV) are disordered.

In terms of assembly, component of the CENP-A recruiting complex composed of at least mis16, mis19, mis19 and mis20.

It is found in the cytoplasm. It localises to the cytoskeleton. The protein localises to the microtubule organizing center. The protein resides in the spindle pole body. Its subcellular location is the chromosome. It is found in the centromere. Component of the CENP-A recruiting complex that ensures the integrity of mitotic spindles through maintenance of kinetochore factors mis6/CENP-I and cnp1/CENP-A. Seems dispensable for proper chromosome segregation. This Schizosaccharomyces pombe (strain 972 / ATCC 24843) (Fission yeast) protein is CENP-A recruiting complex protein mis20.